Reading from the N-terminus, the 120-residue chain is Large ribosomal subunit protein bL17 (120 aa).

The protein belongs to the bacterial ribosomal protein bL17 family. Part of the 50S ribosomal subunit. Contacts protein L32.

This Mesomycoplasma hyopneumoniae (strain J / ATCC 25934 / NCTC 10110) (Mycoplasma hyopneumoniae) protein is Large ribosomal subunit protein bL17.